The chain runs to 454 residues: Transmembrane protease serine 3 (454 aa).

Residues 1 to 48 (MGENDPPAVEAPFSFRSLFGLDDLKISPVAPDADAVAAQILSLLPLKF) lie on the Cytoplasmic side of the membrane. The chain crosses the membrane as a helical; Signal-anchor for type II membrane protein span at residues 49 to 69 (FPIIVIGIIALILALAIGLGI). The Extracellular portion of the chain corresponds to 70–454 (HFDCSGKYRC…HEQMERDLKT (385 aa)). Positions 72 to 108 (DCSGKYRCRSSFKCIELIARCDGVSDCKDGEDEYRCV) constitute an LDL-receptor class A domain. 10 disulfides stabilise this stretch: Cys73–Cys85, Cys79–Cys98, Cys92–Cys107, Cys129–Cys194, Cys142–Cys204, Cys207–Cys324, Cys242–Cys258, Cys338–Cys407, Cys370–Cys386, and Cys397–Cys425. Residues 109-205 (RVGGQNAVLQ…SGHVVTLQCT (97 aa)) enclose the SRCR domain. The Peptidase S1 domain maps to 217-449 (IVGGNMSLLS…FLDWIHEQME (233 aa)). Residue Asn221 is glycosylated (N-linked (GlcNAc...) asparagine). Catalysis depends on charge relay system residues His257 and Asp304. Catalysis depends on Ser401, which acts as the Charge relay system.

It belongs to the peptidase S1 family. Undergoes autoproteolytic activation. As to expression, expressed in many tissues including fetal cochlea. Isoform T is found at increased levels in some carcinomas.

Its subcellular location is the endoplasmic reticulum membrane. Probable serine protease that plays a role in hearing. Acts as a permissive factor for cochlear hair cell survival and activation at the onset of hearing and is required for saccular hair cell survival. Activates ENaC (in vitro). In Homo sapiens (Human), this protein is Transmembrane protease serine 3 (TMPRSS3).